Here is an 803-residue protein sequence, read N- to C-terminus: DNA polymerase 2 (803 aa).

The protein belongs to the DNA polymerase type-B family.

The catalysed reaction is DNA(n) + a 2'-deoxyribonucleoside 5'-triphosphate = DNA(n+1) + diphosphate. The protein is DNA polymerase 2 (polB) of Aeropyrum pernix (strain ATCC 700893 / DSM 11879 / JCM 9820 / NBRC 100138 / K1).